We begin with the raw amino-acid sequence, 353 residues long: Protein RecA (353 aa).

67-74 (GPESSGKT) provides a ligand contact to ATP.

This sequence belongs to the RecA family.

Its subcellular location is the cytoplasm. Functionally, can catalyze the hydrolysis of ATP in the presence of single-stranded DNA, the ATP-dependent uptake of single-stranded DNA by duplex DNA, and the ATP-dependent hybridization of homologous single-stranded DNAs. It interacts with LexA causing its activation and leading to its autocatalytic cleavage. The chain is Protein RecA from Salmonella agona (strain SL483).